We begin with the raw amino-acid sequence, 512 residues long: MLKHISSVFWIVIAITAAAVLWGVISPDSLQNVSQSAQAFITDSFGWYYLLVVSLFVGFCLFLIFSPIGKIKLGKPDEKPEFGLLSWFAMLFSAGMGIGLVFYGAAEPISHYAISSPSGETETPQAFRDALRYTFFHWGLHAWAIYAIVALCIAYFQFRKGAPGLISSTLSPILGDKVNGPIGKAIDCIAVFATVVGVSTSLGLGATQINGGLNYLFGIPNAFIVQLVLIIIVTVLFLLSAWSGLGKGIKYLSNTNMVLAGLLMLFMLVVGPTVLIMNSFTDSIGQYIQNIVQMSFRLTPNDPEKREWINSWTIFYWAWWISWSPFVGIFIARVSRGRTIREFLIGVLVTPCILTFLWFSIFGVSAMDLQQKGAFNVAKLSTETMLFGTLDHYPLTMVTSILALILIAVFFITSADSATFVLGMQTSYGSLNPANSVKLSWGIIQSAMAAVLLYSGGLAALQNTAILAALPFSIVILLMIASLYQSLSKERREIKKAEKLDKPRSPRVKKAY.

The next 12 membrane-spanning stretches (helical) occupy residues 5–25 (ISSVFWIVIAITAAAVLWGVI), 45–65 (FGWYYLLVVSLFVGFCLFLIF), 82–102 (FGLLSWFAMLFSAGMGIGLVF), 135–155 (FFHWGLHAWAIYAIVALCIAY), 186–206 (IDCIAVFATVVGVSTSLGLGA), 222–242 (AFIVQLVLIIIVTVLFLLSAW), 257–277 (MVLAGLLMLFMLVVGPTVLIM), 312–332 (WTIFYWAWWISWSPFVGIFIA), 343–363 (FLIGVLVTPCILTFLWFSIFG), 395–415 (LTMVTSILALILIAVFFITSA), 441–461 (WGIIQSAMAAVLLYSGGLAAL), and 464–484 (TAILAALPFSIVILLMIASLY).

It belongs to the BCCT transporter (TC 2.A.15) family.

It is found in the cell membrane. Its activity is regulated as follows. Activity is stimulated by high osmolarity. Its function is as follows. High-affinity uptake of glycine betaine. Does not mediate either carnitine or choline uptake. The chain is Glycine betaine transporter OpuD (opuD) from Bacillus subtilis (strain 168).